Reading from the N-terminus, the 148-residue chain is MCPPVRQRPAQAPPAKRQALETVPHPQNRGRLMSPKARPPKMQRRPRPPVAKRRRFPRSPQQVERPILPPVESTPQDMEPGQVQSPPQITAVIQLRQERDTMRPPIYLPALLANCGPAGLLRAHRLPQPKPPCLSRQRPSPDSQTSPC.

A compositionally biased stretch (low complexity) spans 1-17 (MCPPVRQRPAQAPPAKR). 2 disordered regions span residues 1-86 (MCPP…VQSP) and 122-148 (RAHRLPQPKPPCLSRQRPSPDSQTSPC). The segment covering 38 to 57 (RPPKMQRRPRPPVAKRRRFP) has biased composition (basic residues). Residues 137-148 (QRPSPDSQTSPC) are compositionally biased toward polar residues.

Belongs to the Epstein-Barr virus BLLF2 family.

This is an uncharacterized protein from Epstein-Barr virus (strain AG876) (HHV-4).